A 417-amino-acid chain; its full sequence is MTPQVASDSAVPWPRRRTQAVNIGHVTVGGGHPVVVQSMTNTDTADVVASTKQVAELWRAGSEMVRLTVNNAQSAAAIPRIAERLAMMGIDVPLIGDFHYNGHQLLADEPACAEVLAKYRINPGNVGFGKKRDLQFGQLIECAIRYGKPIRIGANWGSLDQMLAAQLMDENNRRKQPWDAAQVLREVLICSAVGSAERAVELGLPRDRIVLSAKVSGVQELIAVYRDMAARCDFALHLGLTEAGIGSKGIVASSAALAVLLQEGIGDTIRISLTPEPGQSRTQEVIVAQELLQTTGHRAFTPMVTACPGCGRTTSEFFQELAKTVQQHVRDKMQVWKITHPGAETMTLAVMGCVVNGPGESRHANIGISLPGTGEMPVAPVFIDGEKSVTLRGENIAQDFIALVDDYVERRYARFPD.

[4Fe-4S] cluster contacts are provided by C307, C310, C353, and E360.

This sequence belongs to the IspG family. The cofactor is [4Fe-4S] cluster.

It carries out the reaction (2E)-4-hydroxy-3-methylbut-2-enyl diphosphate + oxidized [flavodoxin] + H2O + 2 H(+) = 2-C-methyl-D-erythritol 2,4-cyclic diphosphate + reduced [flavodoxin]. Its pathway is isoprenoid biosynthesis; isopentenyl diphosphate biosynthesis via DXP pathway; isopentenyl diphosphate from 1-deoxy-D-xylulose 5-phosphate: step 5/6. In terms of biological role, converts 2C-methyl-D-erythritol 2,4-cyclodiphosphate (ME-2,4cPP) into 1-hydroxy-2-methyl-2-(E)-butenyl 4-diphosphate. This Xylella fastidiosa (strain 9a5c) protein is 4-hydroxy-3-methylbut-2-en-1-yl diphosphate synthase (flavodoxin).